A 409-amino-acid polypeptide reads, in one-letter code: Arginine deiminase (409 aa).

Cysteine 399 acts as the Amidino-cysteine intermediate in catalysis.

Belongs to the arginine deiminase family.

The protein localises to the cytoplasm. It catalyses the reaction L-arginine + H2O = L-citrulline + NH4(+). Its pathway is amino-acid degradation; L-arginine degradation via ADI pathway; carbamoyl phosphate from L-arginine: step 1/2. The sequence is that of Arginine deiminase from Streptococcus pneumoniae serotype 19F (strain G54).